A 70-amino-acid chain; its full sequence is Small, acid-soluble spore protein alpha (70 aa).

This sequence belongs to the alpha/beta-type SASP family.

SASP are bound to spore DNA. They are double-stranded DNA-binding proteins that cause DNA to change to an a-like conformation. They protect the DNA backbone from chemical and enzymatic cleavage and are thus involved in dormant spore's high resistance to UV light. In Paraclostridium bifermentans (Clostridium bifermentans), this protein is Small, acid-soluble spore protein alpha.